Reading from the N-terminus, the 461-residue chain is Ribonuclease inhibitor (461 aa).

At serine 2 the chain carries N-acetylserine. Residues 2 to 11 (SLDIQSLDIQ) form a 2 X 5 AA tandem repeats of S-L-D-I-Q region. LRR repeat units follow at residues 20-48 (WAEL…CKDI), 49-76 (SSAL…VHCV), 77-105 (LQGL…CGVL), 106-133 (SSTL…LQLL), 134-162 (CEGL…CEPL), 163-190 (ASVL…VRVL), 191-219 (CQGL…CRDL), 220-247 (CGIV…MAEL), 248-276 (CPGL…CGDL), 277-304 (CRVL…ARLL), 305-333 (CETL…CSHF), 334-361 (SSVL…VREL), 362-390 (CQGL…CSSL), 391-418 (AATL…ILQL), and 419-447 (VESV…EDRL). Threonine 82 bears the Phosphothreonine mark. At serine 91 the chain carries Phosphoserine.

Forms high-affinity heterodimers with RNASE1, ANG and RNASE2. In terms of processing, the N-terminus is blocked. Post-translationally, at least 30 of the 32 cysteine residues are in the reduced form.

It is found in the cytoplasm. The protein localises to the nucleus. Its function is as follows. Ribonuclease inhibitor which inhibits RNASE1, RNASE2 and angiogenin (ANG). May play a role in redox homeostasis. Required to inhibit the cytotoxic tRNA ribonuclease activity of ANG in the cytoplasm in absence of stress. Relocates to the nucleus in response to stress, relieving inhibition of ANG in the cytoplasm, and inhibiting the angiogenic activity of ANG in the nucleus. The polypeptide is Ribonuclease inhibitor (Homo sapiens (Human)).